The primary structure comprises 117 residues: MITLFLILCYFILIFNIIVPAISEKMRRERAAYVNYKRLNKNFICVDDRLFSYNFTTSGIKAKVAVDNKNVPIPCSKINEVNNNKDVDTLYCDKDRDDIPGFARSCYRAYSDLFFTT.

The helical; Signal-anchor for type III membrane protein transmembrane segment at 1–21 threads the bilayer; that stretch reads MITLFLILCYFILIFNIIVPA. Residues 22–117 are Virion surface-facing; that stretch reads ISEKMRRERA…RAYSDLFFTT (96 aa).

Belongs to the chordopoxvirinae A21 family. As to quaternary structure, envelope protein part of a stable entry-fusion complex (EFC) which is at least composed of proteins A16, A21, A28, G3, G9, H2, J5, and L5. Formation of the viral membrane is necessary for the assembly of the complex. In terms of processing, contains two intramolecular disulfide bonds. They are created by the viral disulfide bond formation pathway, a poxvirus-specific pathway that operates on the cytoplasmic side of the MV membranes.

It localises to the virion membrane. Envelope protein part of the entry-fusion complex responsible for the virus membrane fusion with host cell membrane during virus entry. This is Virion membrane protein A21 from Vaccinia virus (strain Ankara) (VACV).